Reading from the N-terminus, the 1010-residue chain is Sodium/potassium-transporting ATPase subunit alpha-3 (1010 aa).

Positions 1 to 21 (MGDKDDRFPKKKKGGTKDMDA) are disordered. Residues 1-74 (MGDKDDRFPK…NALTPPPTTP (74 aa)) lie on the Cytoplasmic side of the membrane. The segment at 69-71 (PPP) is interaction with phosphoinositide-3 kinase. A helical membrane pass occupies residues 75–95 (EWVKFCRQLFGGFSILLWTGA). Residues 96–118 (ILCFLAYAIQAATEDEPAGDNLY) are Extracellular-facing. A helical membrane pass occupies residues 119–139 (LGIVLTAVVVITGCFSYFQEA). Topologically, residues 140–275 (KSSKIMESFK…TGKTPIAVEI (136 aa)) are cytoplasmic. The segment covering 201–216 (DNSSLTGESEPQSRSP) has biased composition (polar residues). Residues 201-221 (DNSSLTGESEPQSRSPDCTHD) are disordered. The chain crosses the membrane as a helical span at residues 276 to 295 (EHFIHIITGVAVFLGVTFFI). Over 296–307 (LAIILGYTWLKA) the chain is Extracellular. A helical transmembrane segment spans residues 308–325 (VIFLIGIIVANVPEGLLA). Residues 326-759 (TVTVCLTLTA…EEGRLIFDNL (434 aa)) lie on the Cytoplasmic side of the membrane. Asp-363 functions as the 4-aspartylphosphate intermediate in the catalytic mechanism. Positions 704 and 708 each coordinate Mg(2+). The chain crosses the membrane as a helical span at residues 760 to 779 (KKSIAYTLTSNIPEITPFLF). The Extracellular portion of the chain corresponds to 780–789 (FIIVNIPLAL). The chain crosses the membrane as a helical span at residues 790–810 (GTITILCIDLGTDMGSAISLA). At 811-830 (YETAESDIMKRQPRNPCRDK) the chain is on the cytoplasmic side. The helical transmembrane segment at 831–853 (LVNERLISIAYGQIGMIQALGGF) threads the bilayer. Over 854 to 905 (FSYFVILAENGFLPSQLVGIRLNWDDRSLNDLEDSYGQQWTYEQRKIVEFTC) the chain is Extracellular. Residues 906 to 925 (HTAFFVSIVVVQWADLIICK) form a helical membrane-spanning segment. The Cytoplasmic portion of the chain corresponds to 926–938 (TRRNSVFQQGMKN). A Phosphoserine; by PKA modification is found at Ser-930. A helical membrane pass occupies residues 939–957 (KILIFGLFEETALAAFLSY). The Extracellular segment spans residues 958-972 (CPGMDVALRMYPLKP). Residues 973–993 (TWWFWAFPYSFLIFVYDEARK) form a helical membrane-spanning segment. Residues 994–1010 (LILCRNPGGWVEKETYY) lie on the Cytoplasmic side of the membrane.

This sequence belongs to the cation transport ATPase (P-type) (TC 3.A.3) family. Type IIC subfamily. As to quaternary structure, the sodium/potassium-transporting ATPase is composed of a catalytic alpha subunit, an auxiliary non-catalytic beta subunit and an additional regulatory subunit.

It localises to the cell membrane. It catalyses the reaction K(+)(out) + Na(+)(in) + ATP + H2O = K(+)(in) + Na(+)(out) + ADP + phosphate + H(+). This is the catalytic component of the active enzyme, which catalyzes the hydrolysis of ATP coupled with the exchange of sodium and potassium ions across the plasma membrane. This action creates the electrochemical gradient of sodium and potassium ions, providing the energy for active transport of various nutrients. The chain is Sodium/potassium-transporting ATPase subunit alpha-3 (atp1a3) from Oreochromis mossambicus (Mozambique tilapia).